A 510-amino-acid chain; its full sequence is Serine/threonine-protein kinase UL13 homolog (510 aa).

Residues 1–63 (MDADDTPPNL…WANPSTATCM (63 aa)) form a disordered region. Positions 132 to 458 (RDRPRFAGRG…RRIFQCHAVR (327 aa)) constitute a Protein kinase domain. ATP is bound by residues 138-146 (AGRGTYGRV) and Lys157. The active-site Proton acceptor is Asp257.

It belongs to the protein kinase superfamily. Ser/Thr protein kinase family. Post-translationally, autophosphorylated.

Its subcellular location is the virion tegument. It is found in the host nucleus. It carries out the reaction L-seryl-[protein] + ATP = O-phospho-L-seryl-[protein] + ADP + H(+). It catalyses the reaction L-threonyl-[protein] + ATP = O-phospho-L-threonyl-[protein] + ADP + H(+). Functionally, multifunctional serine/threonine kinase that plays a role in several processes including egress of virus particles from the nucleus, modulation of the actin cytoskeleton and regulation of viral and cellular gene expression. Regulates the nuclear localization of viral envelopment factor proteins 24 and 27, by phosphorylating the protein kinase ORF66, indicating a role in nuclear egress. Disrupts host nuclear lamins, including LMNA and LMNB1. Phosphorylates the viral Fc receptor composed of glycoproteins E (gE) and I (gI). Phosphorylation of glycoprotein E (gE) by UL13 alters its subcellular localization, from the host early endosome to the plasma membrane. Participates in the transcriptional regulation of cellular and viral mRNAs mainly by phosphorylating the viral transcriptional regulator IE63. This Varicella-zoster virus (strain Dumas) (HHV-3) protein is Serine/threonine-protein kinase UL13 homolog.